The primary structure comprises 345 residues: Selenide, water dikinase (345 aa).

Cysteine 15 is an active-site residue. Residues lysine 18 and 46-48 (SKD) contribute to the ATP site. Aspartate 49 contacts Mg(2+). ATP-binding positions include aspartate 66, aspartate 89, and 137-139 (GHS). Aspartate 89 is a binding site for Mg(2+). A Mg(2+)-binding site is contributed by aspartate 225.

The protein belongs to the selenophosphate synthase 1 family. Class I subfamily. In terms of assembly, homodimer. Mg(2+) serves as cofactor.

It catalyses the reaction hydrogenselenide + ATP + H2O = selenophosphate + AMP + phosphate + 2 H(+). In terms of biological role, synthesizes selenophosphate from selenide and ATP. This chain is Selenide, water dikinase, found in Aeromonas salmonicida (strain A449).